A 259-amino-acid polypeptide reads, in one-letter code: Probable dihydroorotate dehydrogenase B (NAD(+)), electron transfer subunit (259 aa).

The FAD-binding FR-type domain maps to 1 to 89 (MLPLNATIVQ…RGPFGKGFSL (89 aa)). Positions 211, 216, 219, and 229 each coordinate [2Fe-2S] cluster.

It belongs to the PyrK family. In terms of assembly, heterotetramer of 2 PyrK and 2 PyrD type B subunits. The cofactor is [2Fe-2S] cluster. FAD serves as cofactor.

It functions in the pathway pyrimidine metabolism; UMP biosynthesis via de novo pathway; orotate from (S)-dihydroorotate (NAD(+) route): step 1/1. Functionally, responsible for channeling the electrons from the oxidation of dihydroorotate from the FMN redox center in the PyrD type B subunit to the ultimate electron acceptor NAD(+). The chain is Probable dihydroorotate dehydrogenase B (NAD(+)), electron transfer subunit from Methanosarcina barkeri (strain Fusaro / DSM 804).